We begin with the raw amino-acid sequence, 212 residues long: uncharacterized protein (212 aa).

3 residues coordinate S-adenosyl-L-methionine: Gly53, Glu74, and Asp97.

Belongs to the methyltransferase superfamily. YrrT family.

Functionally, could be a S-adenosyl-L-methionine-dependent methyltransferase. This is an uncharacterized protein from Bacillus cereus (strain ATCC 14579 / DSM 31 / CCUG 7414 / JCM 2152 / NBRC 15305 / NCIMB 9373 / NCTC 2599 / NRRL B-3711).